The chain runs to 281 residues: N-acetyltransferase ECO1 (281 aa).

The CCHH-type zinc finger occupies 33 to 57 (VKCDKCEMSYSSTSIEDRAIHEKYH). Positions 86-105 (LSRSTGTITPLNSSPLKKSS) are disordered. Over residues 95-105 (PLNSSPLKKSS) the composition is skewed to low complexity. Lys-223 carries the post-translational modification N6-acetyllysine; by autocatalysis.

This sequence belongs to the acetyltransferase family. ECO subfamily. As to quaternary structure, binds specifically to CHL12, RFC1, RFC2, RFC3, RFC4, RFC5 and RAD24 when members of an RFC complex. Interacts with CHL1 and MPS3. Autoacetylates in vitro.

Its subcellular location is the nucleus. Required for establishment of sister chromatid cohesion during S phase but not for its further maintenance during G2 or M phases or for loading the cohesin complex onto DNA. Interacts with the three known alternate replication factor C (RFC) complexes, suggesting that these complexes have essential but redundant activity in cohesion establishment. Acts by acetylating the cohesin complex component SMC3. In vitro, possesses acetyltransferase activity where it can acetylate itself and components of the cohesin complex (MCD1, IRR1 and PDS5), but is unable to acetylate histones. This Saccharomyces cerevisiae (strain ATCC 204508 / S288c) (Baker's yeast) protein is N-acetyltransferase ECO1 (ECO1).